Reading from the N-terminus, the 306-residue chain is Acetyl-coenzyme A carboxylase carboxyl transferase subunit beta (306 aa).

One can recognise a CoA carboxyltransferase N-terminal domain in the interval 27–296; sequence LWHKCPSCEA…PRFVAPVIEP (270 aa). The Zn(2+) site is built by cysteine 31, cysteine 34, cysteine 50, and cysteine 53. The C4-type zinc-finger motif lies at 31–53; that stretch reads CPSCEAVLYRPELEKTLDVCPKC.

This sequence belongs to the AccD/PCCB family. In terms of assembly, acetyl-CoA carboxylase is a heterohexamer composed of biotin carboxyl carrier protein (AccB), biotin carboxylase (AccC) and two subunits each of ACCase subunit alpha (AccA) and ACCase subunit beta (AccD). It depends on Zn(2+) as a cofactor.

Its subcellular location is the cytoplasm. It carries out the reaction N(6)-carboxybiotinyl-L-lysyl-[protein] + acetyl-CoA = N(6)-biotinyl-L-lysyl-[protein] + malonyl-CoA. It participates in lipid metabolism; malonyl-CoA biosynthesis; malonyl-CoA from acetyl-CoA: step 1/1. Its function is as follows. Component of the acetyl coenzyme A carboxylase (ACC) complex. Biotin carboxylase (BC) catalyzes the carboxylation of biotin on its carrier protein (BCCP) and then the CO(2) group is transferred by the transcarboxylase to acetyl-CoA to form malonyl-CoA. The chain is Acetyl-coenzyme A carboxylase carboxyl transferase subunit beta from Pseudomonas syringae pv. syringae (strain B728a).